Consider the following 549-residue polypeptide: Dihydroxy-acid dehydratase (549 aa).

Residue D78 participates in Mg(2+) binding. [2Fe-2S] cluster is bound at residue C119. D120 and K121 together coordinate Mg(2+). K121 is modified (N6-carboxylysine). Residue C191 coordinates [2Fe-2S] cluster. E441 lines the Mg(2+) pocket. S466 functions as the Proton acceptor in the catalytic mechanism.

It belongs to the IlvD/Edd family. In terms of assembly, homodimer. The cofactor is [2Fe-2S] cluster. It depends on Mg(2+) as a cofactor.

The catalysed reaction is (2R)-2,3-dihydroxy-3-methylbutanoate = 3-methyl-2-oxobutanoate + H2O. The enzyme catalyses (2R,3R)-2,3-dihydroxy-3-methylpentanoate = (S)-3-methyl-2-oxopentanoate + H2O. The protein operates within amino-acid biosynthesis; L-isoleucine biosynthesis; L-isoleucine from 2-oxobutanoate: step 3/4. It functions in the pathway amino-acid biosynthesis; L-valine biosynthesis; L-valine from pyruvate: step 3/4. Functionally, functions in the biosynthesis of branched-chain amino acids. Catalyzes the dehydration of (2R,3R)-2,3-dihydroxy-3-methylpentanoate (2,3-dihydroxy-3-methylvalerate) into 2-oxo-3-methylpentanoate (2-oxo-3-methylvalerate) and of (2R)-2,3-dihydroxy-3-methylbutanoate (2,3-dihydroxyisovalerate) into 2-oxo-3-methylbutanoate (2-oxoisovalerate), the penultimate precursor to L-isoleucine and L-valine, respectively. In Methanobrevibacter smithii (strain ATCC 35061 / DSM 861 / OCM 144 / PS), this protein is Dihydroxy-acid dehydratase.